A 300-amino-acid polypeptide reads, in one-letter code: Acetylglutamate kinase (300 aa).

Residues 68-69, Arg-90, and Asn-194 contribute to the substrate site; that span reads GG.

Belongs to the acetylglutamate kinase family. ArgB subfamily.

It localises to the cytoplasm. It carries out the reaction N-acetyl-L-glutamate + ATP = N-acetyl-L-glutamyl 5-phosphate + ADP. It participates in amino-acid biosynthesis; L-arginine biosynthesis; N(2)-acetyl-L-ornithine from L-glutamate: step 2/4. Functionally, catalyzes the ATP-dependent phosphorylation of N-acetyl-L-glutamate. In Methanocella arvoryzae (strain DSM 22066 / NBRC 105507 / MRE50), this protein is Acetylglutamate kinase.